The primary structure comprises 176 residues: Viral interleukin-10 homolog (176 aa).

The N-terminal stretch at 1–25 (MLSVMVSSSLVLIVFFLGASEEAKP) is a signal peptide. 2 disulfides stabilise this stretch: Cys38–Cys128 and Cys82–Cys133. N-linked (GlcNAc...) asparagine; by host glycosylation is present at Asn152.

This sequence belongs to the IL-10 family. Homodimer; disulfide-linked.

It is found in the secreted. Its function is as follows. Functional viral IL-10 homolog. Can bind to the human IL-10 receptor and compete with human IL-10 for binding sites. Requires both subunits of the human IL-10 receptor complex to induce signal transduction events and biological activities. IL-10 signaling pathway has several immunosuppressive activities that are exploited by the virus. Inhibits TLR-induced type I interferon production in host plasmacytoid dendritic cells. The protein is Viral interleukin-10 homolog (UL111A) of Homo sapiens (Human).